The following is a 4022-amino-acid chain: Intermembrane lipid transfer protein VPS13B (4022 aa).

The 101-residue stretch at 2-102 folds into the Chorein N-terminal domain; the sequence is LESYVTPILM…KDGIQDDHES (101 aa). The disordered stretch occupies residues 100-134; the sequence is HESCGSNSTNRSTAESTKSSIKPRRMQQAAPTDPD. Polar residues predominate over residues 103 to 119; that stretch reads CGSNSTNRSTAESTKSS. Phosphoserine occurs at positions 414, 999, 1002, and 1033. The tract at residues 1247-1314 is disordered; the sequence is NLSPTSPETM…SVTLEQTTSN (68 aa). Composition is skewed to polar residues over residues 1264–1292 and 1302–1314; these read PVRSSIGTAPPDTSTCSPSADIGTTTEGD and FSDSVTLEQTTSN. Residue Ser-1815 is modified to Phosphoserine. A compositionally biased stretch (basic and acidic residues) spans 1860 to 1872; the sequence is KSQEQKNNEKTDK. The segment at 1860-1880 is disordered; the sequence is KSQEQKNNEKTDKSSLNLPEV. Positions 2631–2716 constitute an SHR-BD domain; sequence HFVICNDTQE…RTASLIIKVQ (86 aa). Residues 3908–4022 form a localizes the protein to the Golgi apparatus region; the sequence is AFPVTEIDCA…KNKALRKGFP (115 aa).

It belongs to the VPS13 family. In terms of assembly, interacts with STX6. Interacts with STX12. Interacts with RAB6A isoform 1 (GTP-bound) and isoform 2 (GTP-bound). Interacts with RAB6B (GTP-bound). As to expression, widely expressed. There is apparent differential expression of different transcripts. In fetal brain, lung, liver, and kidney, two transcripts of 2 and 5 kb are identified. These transcripts are also seen in all adult tissues analyzed. A larger transcript (12-14 kb) is expressed in prostate, testis, ovary, and colon in the adult. Expression is very low in adult brain tissue. Expressed in peripheral blood lymphocytes. Isoform 1 and isoform 2 are expressed in brain and retina. Isoform 2 is expressed ubiquitously.

The protein resides in the recycling endosome membrane. It localises to the cytoplasmic vesicle. Its subcellular location is the secretory vesicle. It is found in the acrosome membrane. The protein localises to the golgi apparatus. The protein resides in the cis-Golgi network membrane. It localises to the endoplasmic reticulum-Golgi intermediate compartment membrane. Its subcellular location is the trans-Golgi network membrane. It is found in the early endosome membrane. The protein localises to the lysosome membrane. Mediates the transfer of lipids between membranes at organelle contact sites. Binds phosphatidylinositol 3-phosphate. Functions as a tethering factor in the slow endocytic recycling pathway, to assist traffic between early and recycling endosomes. Involved in the transport of proacrosomal vesicles to the nuclear dense lamina (NDL) during spermatid development. Plays a role in the assembly of the Golgi apparatus, possibly by mediating trafficking to the Golgi membrane. Plays a role in the development of the nervous system, and may be required for neuron projection development. May also play a role during adipose tissue development. Required for maintenance of the ocular lens. The sequence is that of Intermembrane lipid transfer protein VPS13B (VPS13B) from Homo sapiens (Human).